An 811-amino-acid polypeptide reads, in one-letter code: DEAD-box ATP-dependent RNA helicase 48 (811 aa).

Disordered stretches follow at residues 1–32 (MGGGPRTFPGGLSKWQHKRMHEKLARHKERGL) and 93–138 (DDGP…EPRL). The segment covering 15–29 (WQHKRMHEKLARHKE) has biased composition (basic residues). Basic and acidic residues-rich tracts occupy residues 95–104 (GPIHRADRPR) and 117–138 (GDRRKLDSTKQELPRGGKEPRL). The stretch at 286-333 (RNCDMKKERRALKSYEEENNDLAGSFRELREEIKNREVLGAERRRYES) forms a coiled coil. The short motif at 342–370 (KRFEECGISPLTVKALTDAGYVQTTVVQE) is the Q motif element. Residues 373-556 (LPMCLEGKDV…QLVLKRDHVF (184 aa)) enclose the Helicase ATP-binding domain. Position 386–393 (386–393 (AKTGTGKS)) interacts with ATP. The short motif at 504-507 (DEAD) is the DEAD box element. Residues 570-740 (KVEQLYLVMP…EMKRKVDGSI (171 aa)) form the Helicase C-terminal domain.

This sequence belongs to the DEAD box helicase family.

The catalysed reaction is ATP + H2O = ADP + phosphate + H(+). The sequence is that of DEAD-box ATP-dependent RNA helicase 48 from Oryza sativa subsp. japonica (Rice).